The chain runs to 308 residues: Cyclin-D2-1 (308 aa).

A disordered region spans residues 286 to 308 (EGLSYDSSSPPPPKRRKRSPPGT). A compositionally biased stretch (basic residues) spans 298-308 (PKRRKRSPPGT).

Belongs to the cyclin family. Cyclin D subfamily.

The protein is Cyclin-D2-1 (CYCD2-1) of Oryza sativa subsp. japonica (Rice).